Here is a 410-residue protein sequence, read N- to C-terminus: Putative F-box/kelch-repeat protein At1g15680 (410 aa).

Residues 13–58 (CKRRIELPEELLAEIVARLPFISITRFKSVCKGWRSLIESTYFRHL) enclose the F-box domain. 2 Kelch repeats span residues 177 to 227 (VVCM…SLKK) and 274 to 327 (AYTT…YFPV).

The protein is Putative F-box/kelch-repeat protein At1g15680 of Arabidopsis thaliana (Mouse-ear cress).